A 313-amino-acid chain; its full sequence is 4-diphosphocytidyl-2-C-methyl-D-erythritol kinase (313 aa).

The active site involves Lys10. 95–105 (PVTAGLGGGSS) contacts ATP. Asp136 is a catalytic residue. Positions 289–313 (HPRVSPWRSPRSASSRSTRRSSRPT) are disordered. Low complexity predominate over residues 292–304 (VSPWRSPRSASSR).

This sequence belongs to the GHMP kinase family. IspE subfamily.

The catalysed reaction is 4-CDP-2-C-methyl-D-erythritol + ATP = 4-CDP-2-C-methyl-D-erythritol 2-phosphate + ADP + H(+). The protein operates within isoprenoid biosynthesis; isopentenyl diphosphate biosynthesis via DXP pathway; isopentenyl diphosphate from 1-deoxy-D-xylulose 5-phosphate: step 3/6. Functionally, catalyzes the phosphorylation of the position 2 hydroxy group of 4-diphosphocytidyl-2C-methyl-D-erythritol. The polypeptide is 4-diphosphocytidyl-2-C-methyl-D-erythritol kinase (Anaeromyxobacter dehalogenans (strain 2CP-1 / ATCC BAA-258)).